The following is a 116-amino-acid chain: Non-specific lipid-transfer protein (116 aa).

Positions 1–25 (MASMVMNVLCVAVACMVFSASYADA) are cleaved as a signal peptide. Disulfide bonds link cysteine 28-cysteine 75, cysteine 38-cysteine 52, cysteine 53-cysteine 98, and cysteine 73-cysteine 112.

This sequence belongs to the plant LTP family.

Its function is as follows. Plant non-specific lipid-transfer proteins transfer phospholipids as well as galactolipids across membranes. May play a role in wax or cutin deposition in the cell walls of expanding epidermal cells and certain secretory tissues. This Gerbera hybrida (Daisy) protein is Non-specific lipid-transfer protein.